Here is an 89-residue protein sequence, read N- to C-terminus: Small ribosomal subunit protein uS15c (89 aa).

The protein belongs to the universal ribosomal protein uS15 family. In terms of assembly, part of the 30S ribosomal subunit.

It is found in the plastid. The protein localises to the organellar chromatophore. The sequence is that of Small ribosomal subunit protein uS15c (rps15) from Paulinella chromatophora.